Reading from the N-terminus, the 316-residue chain is Aspartate carbamoyltransferase catalytic subunit (316 aa).

Carbamoyl phosphate-binding residues include R60 and T61. K88 is an L-aspartate binding site. Positions 110, 138, and 141 each coordinate carbamoyl phosphate. The L-aspartate site is built by R171 and R225. Carbamoyl phosphate contacts are provided by G266 and P267.

Belongs to the aspartate/ornithine carbamoyltransferase superfamily. ATCase family. In terms of assembly, heterododecamer (2C3:3R2) of six catalytic PyrB chains organized as two trimers (C3), and six regulatory PyrI chains organized as three dimers (R2).

It catalyses the reaction carbamoyl phosphate + L-aspartate = N-carbamoyl-L-aspartate + phosphate + H(+). It functions in the pathway pyrimidine metabolism; UMP biosynthesis via de novo pathway; (S)-dihydroorotate from bicarbonate: step 2/3. In terms of biological role, catalyzes the condensation of carbamoyl phosphate and aspartate to form carbamoyl aspartate and inorganic phosphate, the committed step in the de novo pyrimidine nucleotide biosynthesis pathway. The chain is Aspartate carbamoyltransferase catalytic subunit from Rhizorhabdus wittichii (strain DSM 6014 / CCUG 31198 / JCM 15750 / NBRC 105917 / EY 4224 / RW1) (Sphingomonas wittichii).